A 132-amino-acid chain; its full sequence is UPF0299 membrane protein YohJ (132 aa).

4 consecutive transmembrane segments (helical) span residues 7–27 (IIWQ…AGIF), 31–51 (LLPV…VLLA), 63–83 (GCYV…VGVM), and 93–113 (FGPV…VMSW).

The protein belongs to the UPF0299 family.

Its subcellular location is the cell inner membrane. The protein is UPF0299 membrane protein YohJ of Shigella dysenteriae serotype 1 (strain Sd197).